A 1028-amino-acid chain; its full sequence is Contactin-3 (1028 aa).

The first 19 residues, 1–19 (MMLSWKQLILLSFIGCLAG), serve as a signal peptide directing secretion. Ig-like C2-type domains follow at residues 32–117 (PSNS…AKLQ), 122–209 (ENFK…RVLG), 227–313 (PKIE…GRLT), 318–402 (PYWL…AELK), 408–497 (PDFS…LVVT), and 499–593 (PTRI…AELI). 5 disulfide bridges follow: Cys-50–Cys-100, Cys-144–Cys-196, Cys-249–Cys-297, Cys-339–Cys-386, and Cys-431–Cys-479. N-linked (GlcNAc...) asparagine glycans are attached at residues Asn-65 and Asn-193. Residues Asn-377, Asn-468, and Asn-489 are each glycosylated (N-linked (GlcNAc...) asparagine). Cys-521 and Cys-577 form a disulfide bridge. 4 consecutive Fibronectin type-III domains span residues 600–698 (PPEN…TEEA), 703–800 (APSE…SAEE), 805–901 (APSH…TKKT), and 902–998 (PPSQ…TSMD). Residues 684–714 (GEPSLPSEKVRTEEAAPEIAPSEVSGGGGSR) are disordered. N-linked (GlcNAc...) asparagine glycosylation is found at Asn-765, Asn-860, Asn-895, Asn-913, Asn-931, and Asn-956. Ser-1002 carries GPI-anchor amidated serine lipidation. The propeptide at 1003-1028 (TSAISNIHPLSGYMSVLLFFIVNALW) is removed in mature form.

Belongs to the immunoglobulin superfamily. Contactin family. In terms of assembly, interacts with PTPRG. Specifically expressed in brain. Ectopically expressed in tumors expressing endogenous intracisternal A-type particles (IAPs).

Its subcellular location is the cell membrane. Functionally, contactins mediate cell surface interactions during nervous system development. Has some neurite outgrowth-promoting activity. The sequence is that of Contactin-3 (Cntn3) from Mus musculus (Mouse).